Here is a 911-residue protein sequence, read N- to C-terminus: DNA ligase 4 (911 aa).

ATP-binding residues include E271, T272, K273, L274, R278, E331, K345, F367, E427, K432, K449, and K451. The active-site N6-AMP-lysine intermediate is the K273. E331 serves as a coordination point for Mg(2+). E427 lines the Mg(2+) pocket. Residues 610–620 (LASKHFYVGGD) are required for catalytic activity. BRCT domains follow at residues 654 to 743 (KISN…PHFM) and 808 to 911 (SPLS…QYLI).

Belongs to the ATP-dependent DNA ligase family. Interacts with XRCC4; the LIG4-XRCC4 subcomplex has a 1:2 stoichiometry and XRCC4 is required for LIG4 stability. Component of the core long-range non-homologous end joining (NHEJ) complex (also named DNA-PK complex) composed of PRKDC, LIG4, XRCC4, XRCC6/Ku70, XRCC5/Ku86 and NHEJ1/XLF. Additional component of the NHEJ complex includes PAXX. Following autophosphorylation, PRKDC dissociates from DNA, leading to formation of the short-range NHEJ complex, composed of LIG4, XRCC4, XRCC6/Ku70, XRCC5/Ku86 and NHEJ1/XLF. Interacts with DCLRE1C; the interaction is direct. Interacts with APLF. Mg(2+) serves as cofactor.

It is found in the nucleus. It catalyses the reaction ATP + (deoxyribonucleotide)n-3'-hydroxyl + 5'-phospho-(deoxyribonucleotide)m = (deoxyribonucleotide)n+m + AMP + diphosphate.. DNA ligase involved in DNA non-homologous end joining (NHEJ); required for double-strand break (DSB) repair and V(D)J recombination. Catalyzes the NHEJ ligation step of the broken DNA during DSB repair by resealing the DNA breaks after the gap filling is completed. Joins single-strand breaks in a double-stranded polydeoxynucleotide in an ATP-dependent reaction. LIG4 is mechanistically flexible: it can ligate nicks as well as compatible DNA overhangs alone, while in the presence of XRCC4, it can ligate ends with 2-nucleotides (nt) microhomology and 1-nt gaps. Forms a subcomplex with XRCC4; the LIG4-XRCC4 subcomplex is responsible for the NHEJ ligation step and XRCC4 enhances the joining activity of LIG4. Binding of the LIG4-XRCC4 complex to DNA ends is dependent on the assembly of the DNA-dependent protein kinase complex DNA-PK to these DNA ends. LIG4 regulates nuclear localization of XRCC4. This Pongo abelii (Sumatran orangutan) protein is DNA ligase 4.